The primary structure comprises 436 residues: ATP-sensitive inward rectifier potassium channel 14 (436 aa).

The Cytoplasmic portion of the chain corresponds to 1 to 83 (MGLARALRRL…LSDLFTTCVD (83 aa)). The disordered stretch occupies residues 14-43 (LDSGDSRAGDEEEAGPGLCRNGWAPAPVQS). At Cys81 the chain carries S-nitrosocysteine. The chain crosses the membrane as a helical span at residues 84–110 (VRWRWMCLLFSCSFLASWLLFGLAFWL). At 111-133 (IASLHGDLAAPPPPAPCFSHVAS) the chain is on the extracellular side. Residues 134 to 150 (FLAAFLFALETQTSIGY) constitute an intramembrane region (helical; Pore-forming). The Selectivity filter motif lies at 147-152 (SIGYGV). Over 151-159 (GVRSVTEEC) the chain is Extracellular. A helical membrane pass occupies residues 160–187 (PAAVAAVVLQCIAGCVLDAFVVGAVMAK). Residues 188-436 (MAKPKKRNET…TPTLALTLPP (249 aa)) are Cytoplasmic-facing. Residues 400–418 (QEEDEDDETEEGNGVETED) show a composition bias toward acidic residues. The tract at residues 400–436 (QEEDEDDETEEGNGVETEDGAASPRVLTPTLALTLPP) is disordered. Over residues 426-436 (LTPTLALTLPP) the composition is skewed to low complexity.

It belongs to the inward rectifier-type potassium channel (TC 1.A.2.1) family. KCNJ14 subfamily. As to expression, expressed preferentially in retina.

It is found in the membrane. It carries out the reaction K(+)(in) = K(+)(out). With respect to regulation, channel activity is regulated by variations of cytosolic pH; channels are activated by alkaline and inhibited by acidic pH values. Inhibited by Ba(2+) and Cs(+) in a voltage-dependent manner; sensitivity to those inhibitors is lower than in other Kir channels. In terms of biological role, inward rectifier potassium channels are characterized by a greater tendency to allow potassium to flow into the cell rather than out of it. Their voltage dependence is regulated by the concentration of extracellular potassium; as external potassium is raised, the voltage range of the channel opening shifts to more positive voltages. This Homo sapiens (Human) protein is ATP-sensitive inward rectifier potassium channel 14 (KCNJ14).